The following is a 145-amino-acid chain: MQRITITIDDDLLETIDKISEQRGYASRSETLRDLVRDAVTREQAAVDSETKCYATLTYVYEHETRDLSRRLTTTQHHHHDLSVSTLHVHVDGHDCLEVSVLKGTVGEIKSFADSVVTQRGVRFGNLHLIPSEHGPHDHGPHSHD.

The Ni(2+) site is built by H77, H88, H90, and C96.

Belongs to the transcriptional regulatory CopG/NikR family. Requires Ni(2+) as cofactor.

In terms of biological role, transcriptional regulator. In Rhizobium rhizogenes (strain K84 / ATCC BAA-868) (Agrobacterium radiobacter), this protein is Putative nickel-responsive regulator.